The sequence spans 274 residues: Putative HTH-type transcriptional regulator RmpR (274 aa).

Positions 18–88 constitute an HTH gntR-type domain; the sequence is IERADAIVER…RSGGTFVVNQ (71 aa). The segment at residues 46–65 is a DNA-binding region (H-T-H motif); sequence EAALSEMFGVGGATLREALS. Positions 250–265 are enriched in polar residues; it reads SRPSSPATAPDGSSSA. Positions 250–274 are disordered; the sequence is SRPSSPATAPDGSSSAEAAMIQEGQ.

May regulate the transcription of the rmpAB operon. The sequence is that of Putative HTH-type transcriptional regulator RmpR (rmpR) from Mycobacterium gastri.